The sequence spans 204 residues: Minor allergen Alt a 7 (204 aa).

In terms of domain architecture, Flavodoxin-like spans 5–195 (IAIVYYSMYG…NIAQAQGKAF (191 aa)).

It belongs to the WrbA family.

Its subcellular location is the cytoplasm. This chain is Minor allergen Alt a 7 (ALTA7), found in Alternaria alternata (Alternaria rot fungus).